The primary structure comprises 338 residues: Solute carrier family 35 member G3 (338 aa).

The interval 1–24 is disordered; sequence MAGSHPYFNQPDSTHPSPPSAPPS. 9 helical membrane-spanning segments follow: residues 37 to 57, 67 to 87, 105 to 125, 160 to 180, 190 to 210, 221 to 241, 250 to 270, 281 to 301, and 305 to 325; these read TSGLLVALLGGGLPAGFVGPL, LPSLELLIWRCLFHLPIALLL, FFCALLNILSIGCAYSAVQVV, CGLLGCILGLIIIVGPGLWTL, ALGYAEAFLGGRALSLGLLVY, TVAFLSGLVGLLGSVPGLFVL, LLSWSCVGAVGILALVSFTCV, LVCAVLHSEVVVALILQYYML, and VAPSDIMGAGVALGSIAIITA. The EamA 1 domain maps to 49–174; it reads LPAGFVGPLS…CILGLIIIVG (126 aa). Positions 272-325 constitute an EamA 2 domain; sequence YAVTKAHPALVCAVLHSEVVVALILQYYMLHETVAPSDIMGAGVALGSIAIITA.

This sequence belongs to the SLC35G solute transporter family.

Its subcellular location is the membrane. The chain is Solute carrier family 35 member G3 (SLC35G3) from Pan paniscus (Pygmy chimpanzee).